Reading from the N-terminus, the 424-residue chain is Histidine--tRNA ligase (424 aa).

The protein belongs to the class-II aminoacyl-tRNA synthetase family. As to quaternary structure, homodimer.

The protein resides in the cytoplasm. The enzyme catalyses tRNA(His) + L-histidine + ATP = L-histidyl-tRNA(His) + AMP + diphosphate + H(+). This Francisella philomiragia subsp. philomiragia (strain ATCC 25017 / CCUG 19701 / FSC 153 / O#319-036) protein is Histidine--tRNA ligase.